Reading from the N-terminus, the 457-residue chain is Karyogamy meiotic segregation protein 2 (457 aa).

Serine 134 is modified (phosphoserine).

As to quaternary structure, interacts with sad1.

Its subcellular location is the cytoplasm. The protein localises to the cytoskeleton. It is found in the microtubule organizing center. The protein resides in the spindle pole body. The sequence is that of Karyogamy meiotic segregation protein 2 (kms2) from Schizosaccharomyces pombe (strain 972 / ATCC 24843) (Fission yeast).